A 64-amino-acid chain; its full sequence is Large ribosomal subunit protein bL33 (64 aa).

This sequence belongs to the bacterial ribosomal protein bL33 family.

The chain is Large ribosomal subunit protein bL33 from Nostoc sp. (strain PCC 7120 / SAG 25.82 / UTEX 2576).